Consider the following 223-residue polypeptide: Peroxynitrite isomerase 1 (223 aa).

A GXWXGXG motif is present at residues glycine 69 to glycine 75. Residues lysine 186 and histidine 213 each coordinate heme b.

This sequence belongs to the nitrobindin family. In terms of assembly, homodimer. Heme b serves as cofactor.

The enzyme catalyses peroxynitrite = nitrate. Its pathway is nitrogen metabolism. In terms of biological role, heme-binding protein able to scavenge peroxynitrite and to protect free L-tyrosine against peroxynitrite-mediated nitration, by acting as a peroxynitrite isomerase that converts peroxynitrite to nitrate. Therefore, this protein likely plays a role in peroxynitrite sensing and in the detoxification of reactive nitrogen and oxygen species (RNS and ROS, respectively). Is able to bind nitric oxide (NO) in vitro, but may act as a sensor of peroxynitrite levels in vivo. The sequence is that of Peroxynitrite isomerase 1 from Mycobacterium marinum (strain ATCC BAA-535 / M).